The sequence spans 68 residues: MEC1-mediated checkpoint protein HUG1 (68 aa).

The protein resides in the cytoplasm. Its subcellular location is the nucleus. Functionally, involved in the MEC1-mediated checkpoint response to DNA damage and replication arrest. This Saccharomyces cerevisiae (strain ATCC 204508 / S288c) (Baker's yeast) protein is MEC1-mediated checkpoint protein HUG1 (HUG1).